The primary structure comprises 525 residues: GMP synthase [glutamine-hydrolyzing] (525 aa).

A Glutamine amidotransferase type-1 domain is found at Arg9 to Leu207. Cys86 acts as the Nucleophile in catalysis. Catalysis depends on residues His181 and Glu183. The region spanning Trp208–Arg400 is the GMPS ATP-PPase domain. Residue Ser235–Ser241 participates in ATP binding.

In terms of assembly, homodimer.

The catalysed reaction is XMP + L-glutamine + ATP + H2O = GMP + L-glutamate + AMP + diphosphate + 2 H(+). Its pathway is purine metabolism; GMP biosynthesis; GMP from XMP (L-Gln route): step 1/1. Its function is as follows. Catalyzes the synthesis of GMP from XMP. The polypeptide is GMP synthase [glutamine-hydrolyzing] (Klebsiella pneumoniae subsp. pneumoniae (strain ATCC 700721 / MGH 78578)).